A 651-amino-acid chain; its full sequence is DNA mismatch repair protein MutL (651 aa).

The interval 383–405 (TAAEEPTPAPTSPDLEIGDLDDQ) is disordered.

Belongs to the DNA mismatch repair MutL/HexB family.

Functionally, this protein is involved in the repair of mismatches in DNA. It is required for dam-dependent methyl-directed DNA mismatch repair. May act as a 'molecular matchmaker', a protein that promotes the formation of a stable complex between two or more DNA-binding proteins in an ATP-dependent manner without itself being part of a final effector complex. This Lacticaseibacillus casei (strain BL23) (Lactobacillus casei) protein is DNA mismatch repair protein MutL.